A 214-amino-acid polypeptide reads, in one-letter code: Orotate phosphoribosyltransferase (214 aa).

Residues R125, K126, K129, H131, and 151–159 (EDTSTTGNS) contribute to the 5-phospho-alpha-D-ribose 1-diphosphate site. The orotate site is built by T155 and R183.

It belongs to the purine/pyrimidine phosphoribosyltransferase family. PyrE subfamily. Homodimer. It depends on Mg(2+) as a cofactor.

It carries out the reaction orotidine 5'-phosphate + diphosphate = orotate + 5-phospho-alpha-D-ribose 1-diphosphate. It participates in pyrimidine metabolism; UMP biosynthesis via de novo pathway; UMP from orotate: step 1/2. Functionally, catalyzes the transfer of a ribosyl phosphate group from 5-phosphoribose 1-diphosphate to orotate, leading to the formation of orotidine monophosphate (OMP). In Tropheryma whipplei (strain TW08/27) (Whipple's bacillus), this protein is Orotate phosphoribosyltransferase.